The primary structure comprises 342 residues: MNPQKIAVLGPGSWGTALSQVLNDNGHEVRIWGNNLEQMAEINEKHTNTRYFKDVVLDEKIKAYSRLDLALENVDAILFVVPTKVTRLVAKQVAQVLKHKVHILHASKGLEQGTHDRISTILEEEIPAQLRGEIVVVSGPSHAEETIVRDITLISAASNDHDEAKYAQSIFSNDYFRLYTNTDVIGVETAGALKNIIAVGAGALHGLGFGDNAKAAIITRGLAEITRLGVAMGAEPLTYSGLSGVGDLIVTGTSIHSRNWRAGDALGRGEKIADIEKNMGMVIEGVSTTKAAYELAQRLEIDMPITETIYKVLYENLDAKSGILDIMRRETRAENEFININK.

NADPH-binding residues include Ser13, Trp14, and Lys108. Sn-glycerol 3-phosphate is bound by residues Lys108, Gly139, and Ser141. Ala143 contacts NADPH. Residues Lys194, Asp247, Ser257, Arg258, and Asn259 each contribute to the sn-glycerol 3-phosphate site. Lys194 serves as the catalytic Proton acceptor. NADPH is bound at residue Arg258. The NADPH site is built by Val282 and Glu284.

Belongs to the NAD-dependent glycerol-3-phosphate dehydrogenase family.

It is found in the cytoplasm. The enzyme catalyses sn-glycerol 3-phosphate + NAD(+) = dihydroxyacetone phosphate + NADH + H(+). It catalyses the reaction sn-glycerol 3-phosphate + NADP(+) = dihydroxyacetone phosphate + NADPH + H(+). It participates in membrane lipid metabolism; glycerophospholipid metabolism. Functionally, catalyzes the reduction of the glycolytic intermediate dihydroxyacetone phosphate (DHAP) to sn-glycerol 3-phosphate (G3P), the key precursor for phospholipid synthesis. This chain is Glycerol-3-phosphate dehydrogenase [NAD(P)+], found in Lactococcus lactis subsp. cremoris (strain MG1363).